A 328-amino-acid polypeptide reads, in one-letter code: Malate dehydrogenase (328 aa).

12 to 18 is a binding site for NAD(+); it reads GAAGQIG. Residues Arg93 and Arg99 each coordinate substrate. NAD(+)-binding positions include Asn106, Gln113, and 130–132; that span reads TGN. Substrate-binding residues include Asn132 and Arg163. Residue His188 is the Proton acceptor of the active site.

The protein belongs to the LDH/MDH superfamily. MDH type 2 family.

The catalysed reaction is (S)-malate + NAD(+) = oxaloacetate + NADH + H(+). Its function is as follows. Catalyzes the reversible oxidation of malate to oxaloacetate. This chain is Malate dehydrogenase, found in Kocuria rhizophila (strain ATCC 9341 / DSM 348 / NBRC 103217 / DC2201).